Consider the following 631-residue polypeptide: Probable basic-leucine zipper transcription factor F (631 aa).

Residues 35-62 (KKNANVFNNFQQQQQQIQQQNKQSNGLI) are a coiled coil. Disordered stretches follow at residues 46 to 117 (QQQQ…HNNI), 154 to 207 (LNNS…NNQF), and 264 to 406 (MLNV…ERHQ). Composition is skewed to low complexity over residues 155–206 (NNSY…NNNQ) and 271–360 (NNAN…GSNN). The stretch at 328 to 366 (NNNNNNSNNISTQINNLNNNINNQNNQLNGSNNGKKKEE) forms a coiled coil. In terms of domain architecture, bZIP spans 405-468 (HQKRQRRLVK…KLIREQLLYL (64 aa)). Residues 407 to 427 (KRQRRLVKNREAAQLFRQRQK) form a basic motif region. Residues 433 to 440 (LEKKVSDL) are leucine-zipper. Residues 546–631 (QGNLLGTPIP…PPQQSTPNQR (86 aa)) form a disordered region. Composition is skewed to low complexity over residues 563 to 609 (SNSG…PNSS) and 618 to 631 (PQNT…PNQR).

It belongs to the bZIP family.

Its subcellular location is the nucleus. Its function is as follows. Probable transcriptional regulator. This is Probable basic-leucine zipper transcription factor F (bzpF) from Dictyostelium discoideum (Social amoeba).